The following is a 123-amino-acid chain: Large ribosomal subunit protein uL24 (123 aa).

The protein belongs to the universal ribosomal protein uL24 family. Part of the 50S ribosomal subunit.

One of two assembly initiator proteins, it binds directly to the 5'-end of the 23S rRNA, where it nucleates assembly of the 50S subunit. In terms of biological role, one of the proteins that surrounds the polypeptide exit tunnel on the outside of the subunit. In Kineococcus radiotolerans (strain ATCC BAA-149 / DSM 14245 / SRS30216), this protein is Large ribosomal subunit protein uL24.